We begin with the raw amino-acid sequence, 459 residues long: Ribosomal protein uS12 methylthiotransferase RimO (459 aa).

The segment at M1–T28 is disordered. The MTTase N-terminal domain maps to P27 to P137. C36, C72, C101, C168, C172, and C175 together coordinate [4Fe-4S] cluster. Positions L154–A387 constitute a Radical SAM core domain. One can recognise a TRAM domain in the interval A390 to P457.

The protein belongs to the methylthiotransferase family. RimO subfamily. [4Fe-4S] cluster is required as a cofactor.

The protein resides in the cytoplasm. It catalyses the reaction L-aspartate(89)-[ribosomal protein uS12]-hydrogen + (sulfur carrier)-SH + AH2 + 2 S-adenosyl-L-methionine = 3-methylsulfanyl-L-aspartate(89)-[ribosomal protein uS12]-hydrogen + (sulfur carrier)-H + 5'-deoxyadenosine + L-methionine + A + S-adenosyl-L-homocysteine + 2 H(+). In terms of biological role, catalyzes the methylthiolation of an aspartic acid residue of ribosomal protein uS12. In Roseobacter denitrificans (strain ATCC 33942 / OCh 114) (Erythrobacter sp. (strain OCh 114)), this protein is Ribosomal protein uS12 methylthiotransferase RimO.